The primary structure comprises 240 residues: tRNA pseudouridine synthase A (240 aa).

The active-site Nucleophile is the Asp52. Tyr110 serves as a coordination point for substrate.

It belongs to the tRNA pseudouridine synthase TruA family. Homodimer.

It catalyses the reaction uridine(38/39/40) in tRNA = pseudouridine(38/39/40) in tRNA. Formation of pseudouridine at positions 38, 39 and 40 in the anticodon stem and loop of transfer RNAs. The protein is tRNA pseudouridine synthase A of Solibacter usitatus (strain Ellin6076).